We begin with the raw amino-acid sequence, 1024 residues long: Error-prone DNA polymerase (1024 aa).

It belongs to the DNA polymerase type-C family. DnaE2 subfamily.

The protein resides in the cytoplasm. It carries out the reaction DNA(n) + a 2'-deoxyribonucleoside 5'-triphosphate = DNA(n+1) + diphosphate. Functionally, DNA polymerase involved in damage-induced mutagenesis and translesion synthesis (TLS). It is not the major replicative DNA polymerase. The protein is Error-prone DNA polymerase of Vibrio parahaemolyticus serotype O3:K6 (strain RIMD 2210633).